A 178-amino-acid chain; its full sequence is Caveolin-1 (178 aa).

An N-acetylserine modification is found at Ser2. Residue Ser2 is modified to Phosphoserine. The interval 2-94 (SGGKYVDSEG…WKASFTTFTV (93 aa)) is required for homooligomerization. The Cytoplasmic portion of the chain corresponds to 2 to 104 (SGGKYVDSEG…TKYWFYRLLS (103 aa)). Lys5 bears the N6-acetyllysine; alternate mark. Residue Lys5 forms a Glycyl lysine isopeptide (Lys-Gly) (interchain with G-Cter in ubiquitin); alternate linkage. Phosphotyrosine is present on Tyr6. Residue Ser9 is modified to Phosphoserine. At Tyr14 the chain carries Phosphotyrosine; by ABL1. Residue Tyr25 is modified to Phosphotyrosine. Residues Lys26, Lys30, Lys39, Lys47, and Lys57 each participate in a glycyl lysine isopeptide (Lys-Gly) (interchain with G-Cter in ubiquitin) cross-link. The segment at 82 to 94 (DGIWKASFTTFTV) is interaction with CAVIN3. The helical intramembrane region spans 105-125 (ALFGIPMALIWGIYFAILSFL). Residues 126 to 178 (HIWAVVPCIKSFLIEIQCISRVYSIYVHTFCDPLFEAIGKIFSNVRINLQKEI) are Cytoplasmic-facing. The interval 131–142 (VPCIKSFLIEIQ) is interacts with SPRY1, SPRY2, SPRY3 and SPRY4. 3 S-palmitoyl cysteine lipidation sites follow: Cys133, Cys143, and Cys156. The tract at residues 149 to 160 (SIYVHTFCDPLF) is interacts with SPRY1, SPRY2, and SPRY4. Residues 167–178 (FSNVRINLQKEI) are interacts with SPRY1, SPRY2, SPRY3 and SPRY4.

It belongs to the caveolin family. Homooligomer. Interacts with GLIPR2. Interacts with NOSTRIN. Interacts with SNAP25 and STX1A. Interacts (via the N-terminus) with DPP4; the interaction is direct. Interacts with CTNNB1, CDH1 and JUP. Interacts with PACSIN2; this interaction induces membrane tubulation. Interacts with SLC7A9. Interacts with BMX and BTK. Interacts with TGFBR1. Interacts with CAVIN3 (via leucine-zipper domain) in a cholesterol-sensitive manner. Interacts with CAVIN1. Interacts with EHD2 in a cholesterol-dependent manner. Forms a ternary complex with UBXN6 and VCP; mediates CAV1 targeting to lysosomes for degradation. Interacts with ABCG1; this interaction regulates ABCG1-mediated cholesterol efflux. Interacts with NEU3; this interaction enhances NEU3 sialidase activity within caveola. Interacts (via C-terminus) with SPRY1, SPRY2 (via C-terminus), SPRY3, and SPRY4. Interacts with IGFBP5; this interaction allows trafficking of IGFBP5 from the plasma membrane to the nucleus. Post-translationally, phosphorylated at Tyr-14 by ABL1 in response to oxidative stress. In terms of processing, ubiquitinated. Undergo monoubiquitination and multi- and/or polyubiquitination. Monoubiquitination of N-terminal lysines promotes integration in a ternary complex with UBXN6 and VCP which promotes oligomeric CAV1 targeting to lysosomes for degradation. Ubiquitinated by ZNRF1; leading to degradation and modulation of the TLR4-mediated immune response.

It is found in the golgi apparatus membrane. The protein localises to the cell membrane. The protein resides in the membrane. It localises to the caveola. Its subcellular location is the membrane raft. May act as a scaffolding protein within caveolar membranes. Forms a stable heterooligomeric complex with CAV2 that targets to lipid rafts and drives caveolae formation. Mediates the recruitment of CAVIN proteins (CAVIN1/2/3/4) to the caveolae. Interacts directly with G-protein alpha subunits and can functionally regulate their activity. Involved in the costimulatory signal essential for T-cell receptor (TCR)-mediated T-cell activation. Its binding to DPP4 induces T-cell proliferation and NF-kappa-B activation in a T-cell receptor/CD3-dependent manner. Recruits CTNNB1 to caveolar membranes and may regulate CTNNB1-mediated signaling through the Wnt pathway. Negatively regulates TGFB1-mediated activation of SMAD2/3 by mediating the internalization of TGFBR1 from membrane rafts leading to its subsequent degradation. Binds 20(S)-hydroxycholesterol (20(S)-OHC). This chain is Caveolin-1 (CAV1), found in Equus caballus (Horse).